A 713-amino-acid polypeptide reads, in one-letter code: Meiotic activator RIM4 (713 aa).

The interval Met-1 to Arg-90 is disordered. The span at Ala-21–Ile-31 shows a compositional bias: basic and acidic residues. Over residues Gly-50–Glu-71 the composition is skewed to acidic residues. Over residues Gly-74–Arg-90 the composition is skewed to low complexity. The region spanning Ser-93–Val-172 is the RRM 1 domain. Positions His-276–Lys-337 are disordered. Low complexity predominate over residues Asn-278 to Asn-298. Over residues Asn-299 to Thr-327 the composition is skewed to basic and acidic residues. The region spanning Arg-346–Val-420 is the RRM 2 domain. Residues Lys-524–Gly-609 form a disordered region. Ser-525 is modified (phosphoserine). Low complexity predominate over residues Met-526–Asn-546. A compositionally biased stretch (polar residues) spans Gly-563–Tyr-574. The span at Asn-575 to Asn-594 shows a compositional bias: low complexity.

In terms of processing, polyubiquitinated by RSP5.

Its function is as follows. Positive regulator of sporulation-specific genes and of sporulation. Required for premeiotic DNA synthesis and meiotic chromosomal segregation. May act in a nutritional signaling pathway. This Saccharomyces cerevisiae (strain ATCC 204508 / S288c) (Baker's yeast) protein is Meiotic activator RIM4 (RIM4).